We begin with the raw amino-acid sequence, 1196 residues long: DNA-directed RNA polymerase subunit beta (1196 aa).

Belongs to the RNA polymerase beta chain family. As to quaternary structure, the RNAP catalytic core consists of 2 alpha, 1 beta, 1 beta' and 1 omega subunit. When a sigma factor is associated with the core the holoenzyme is formed, which can initiate transcription.

The catalysed reaction is RNA(n) + a ribonucleoside 5'-triphosphate = RNA(n+1) + diphosphate. Its function is as follows. DNA-dependent RNA polymerase catalyzes the transcription of DNA into RNA using the four ribonucleoside triphosphates as substrates. The chain is DNA-directed RNA polymerase subunit beta from Lactococcus lactis subsp. cremoris (strain SK11).